Reading from the N-terminus, the 329-residue chain is Formimidoylglutamase (329 aa).

Mn(2+) contacts are provided by histidine 133, aspartate 159, histidine 161, aspartate 163, aspartate 253, and aspartate 255.

The protein belongs to the arginase family. The cofactor is Mn(2+).

The catalysed reaction is N-formimidoyl-L-glutamate + H2O = formamide + L-glutamate. It participates in amino-acid degradation; L-histidine degradation into L-glutamate; L-glutamate from N-formimidoyl-L-glutamate (hydrolase route): step 1/1. In terms of biological role, catalyzes the conversion of N-formimidoyl-L-glutamate to L-glutamate and formamide. The sequence is that of Formimidoylglutamase from Streptococcus gordonii (strain Challis / ATCC 35105 / BCRC 15272 / CH1 / DL1 / V288).